The chain runs to 162 residues: Ribosome maturation factor RimM (162 aa).

The 72-residue stretch at 91-162 (DGSFYIDDLI…LIDVVIIEGM (72 aa)) folds into the PRC barrel domain.

Belongs to the RimM family. As to quaternary structure, binds ribosomal protein uS19.

Its subcellular location is the cytoplasm. Functionally, an accessory protein needed during the final step in the assembly of 30S ribosomal subunit, possibly for assembly of the head region. Essential for efficient processing of 16S rRNA. May be needed both before and after RbfA during the maturation of 16S rRNA. It has affinity for free ribosomal 30S subunits but not for 70S ribosomes. The sequence is that of Ribosome maturation factor RimM from Finegoldia magna (strain ATCC 29328 / DSM 20472 / WAL 2508) (Peptostreptococcus magnus).